Reading from the N-terminus, the 773-residue chain is Cytochrome c oxidase subunit 1+2 (773 aa).

The tract at residues M1–T491 is COX1. A helical membrane pass occupies residues T41–I61. Position 64 (E64) interacts with Ca(2+). H85 serves as a coordination point for Fe(II)-heme a. Transmembrane regions (helical) follow at residues L87–L111, L130–A150, V173–L193, L211–A231, L262–I278, and I290–V310. Position 264 (H264) interacts with Cu cation. Positions H264 to Y268 form a cross-link, 1'-histidyl-3'-tyrosine (His-Tyr). Y268 serves as a coordination point for O2. Cu cation is bound by residues H314 and H315. Helical transmembrane passes span I335 to V355 and M362 to L382. H392 and D393 together coordinate Mg(2+). Helical transmembrane passes span Y396–G416, F444–A464, I483–F503, I555–W575, and G604–I624. H400 provides a ligand contact to heme a3. H402 serves as a coordination point for Fe(II)-heme a. Residues A492–K773 form a COX2 region. Positions 709, 744, 748, and 752 each coordinate Cu cation.

The protein in the N-terminal section; belongs to the heme-copper respiratory oxidase family. This sequence in the C-terminal section; belongs to the cytochrome c oxidase subunit 2 family. As to quaternary structure, component of the cytochrome c oxidase (complex IV, CIV), a multisubunit enzyme composed of a catalytic core of 3 subunits and several supernumerary subunits. The complex exists as a monomer or a dimer and forms supercomplexes (SCs) in the inner mitochondrial membrane with ubiquinol-cytochrome c oxidoreductase (cytochrome b-c1 complex, complex III, CIII). Requires heme as cofactor. Cu cation serves as cofactor.

The protein resides in the mitochondrion inner membrane. It carries out the reaction 4 Fe(II)-[cytochrome c] + O2 + 8 H(+)(in) = 4 Fe(III)-[cytochrome c] + 2 H2O + 4 H(+)(out). It functions in the pathway energy metabolism; oxidative phosphorylation. Functionally, component of the cytochrome c oxidase, the last enzyme in the mitochondrial electron transport chain which drives oxidative phosphorylation. The respiratory chain contains 3 multisubunit complexes succinate dehydrogenase (complex II, CII), ubiquinol-cytochrome c oxidoreductase (cytochrome b-c1 complex, complex III, CIII) and cytochrome c oxidase (complex IV, CIV), that cooperate to transfer electrons derived from NADH and succinate to molecular oxygen, creating an electrochemical gradient over the inner membrane that drives transmembrane transport and the ATP synthase. Cytochrome c oxidase is the component of the respiratory chain that catalyzes the reduction of oxygen to water. Electrons originating from reduced cytochrome c in the intermembrane space (IMS) are transferred via the dinuclear copper A center (CU(A)) of subunit 2 and heme A of subunit 1 to the active site in subunit 1, a binuclear center (BNC) formed by heme A3 and copper B (CU(B)). The BNC reduces molecular oxygen to 2 water molecules using 4 electrons from cytochrome c in the IMS and 4 protons from the mitochondrial matrix. The protein is Cytochrome c oxidase subunit 1+2 (cox1/2) of Dictyostelium citrinum (Slime mold).